A 133-amino-acid polypeptide reads, in one-letter code: Small ribosomal subunit protein uS8c (133 aa).

Disordered stretches follow at residues 1-23 and 44-133; these read MGND…GAET and FSGN…HVWR. 2 stretches are compositionally biased toward polar residues: residues 12–23 and 55–66; these read APRNASSRGAET and TNRFPVSTSKYQ. Residues 67-81 show a composition bias toward basic residues; that stretch reads GRTRKARITTRRRVS. Residues 114-133 show a composition bias toward basic and acidic residues; the sequence is TDREARQKRIGGEAPRHVWR.

Belongs to the universal ribosomal protein uS8 family. Part of the 30S ribosomal subunit.

The protein resides in the plastid. The protein localises to the chloroplast. Its function is as follows. One of the primary rRNA binding proteins, it binds directly to 16S rRNA central domain where it helps coordinate assembly of the platform of the 30S subunit. This chain is Small ribosomal subunit protein uS8c (rps8), found in Selaginella uncinata (Blue spike-moss).